The primary structure comprises 128 residues: Glycine cleavage system H protein (128 aa).

Residues 24 to 105 enclose the Lipoyl-binding domain; that stretch reads SLTIGVTDHA…AYAAWLFKLK (82 aa). Lysine 65 carries the N6-lipoyllysine modification.

This sequence belongs to the GcvH family. In terms of assembly, the glycine cleavage system is composed of four proteins: P, T, L and H. Requires (R)-lipoate as cofactor.

Functionally, the glycine cleavage system catalyzes the degradation of glycine. The H protein shuttles the methylamine group of glycine from the P protein to the T protein. The chain is Glycine cleavage system H protein from Aromatoleum aromaticum (strain DSM 19018 / LMG 30748 / EbN1) (Azoarcus sp. (strain EbN1)).